The following is a 469-amino-acid chain: 3-isopropylmalate dehydratase large subunit (469 aa).

The [4Fe-4S] cluster site is built by C347, C410, and C413.

The protein belongs to the aconitase/IPM isomerase family. LeuC type 1 subfamily. In terms of assembly, heterodimer of LeuC and LeuD. It depends on [4Fe-4S] cluster as a cofactor.

The catalysed reaction is (2R,3S)-3-isopropylmalate = (2S)-2-isopropylmalate. It participates in amino-acid biosynthesis; L-leucine biosynthesis; L-leucine from 3-methyl-2-oxobutanoate: step 2/4. Functionally, catalyzes the isomerization between 2-isopropylmalate and 3-isopropylmalate, via the formation of 2-isopropylmaleate. The polypeptide is 3-isopropylmalate dehydratase large subunit (Burkholderia ambifaria (strain MC40-6)).